We begin with the raw amino-acid sequence, 1122 residues long: Adhesin P1 (1122 aa).

The N-terminal stretch at 1 to 30 (MKKLIFKLSVGITPLALIGLGSFGLAVSGA) is a signal peptide. Disordered regions lie at residues 183–209 (AGDT…GGAV), 244–273 (DYNS…GGRT), and 544–563 (QNSG…NGNE). Positions 195–208 (AGGGSGSSAAGGGA) are enriched in gly residues. Positions 259 to 273 (LDSSESSESINGGRT) are enriched in polar residues. The chain crosses the membrane as a helical span at residues 997-1021 (VLPVAISIPIIIIALALALGLGIGI). The interval 1066-1122 (KTPQMLQANKKDGASSPSKPSAPAAKKPTGPTKPSAPGAKPTAPAKPKAPAPTKKIE) is disordered. Low complexity predominate over residues 1079-1122 (ASSPSKPSAPAAKKPTGPTKPSAPGAKPTAPAKPKAPAPTKKIE).

The protein belongs to the adhesin P1 family.

Its subcellular location is the cell membrane. Its function is as follows. Could be involved in cytadherence. In Mycoplasmoides gallisepticum (Mycoplasma gallisepticum), this protein is Adhesin P1 (gapA).